Consider the following 353-residue polypeptide: UPF0283 membrane protein YcjF (353 aa).

Residues 16-35 (KEESTSAFKAQQTFSEAESR) form a disordered region. The span at 20–31 (TSAFKAQQTFSE) shows a compositional bias: polar residues. The next 3 membrane-spanning stretches (helical) occupy residues 70 to 90 (MVMGGLALFGASVVGQGVQWT), 100 to 120 (VALGGCAAGALIIGAGVGSVV), and 213 to 233 (ESTLMIAVSPLALVDMAFIAW).

The protein belongs to the UPF0283 family.

It is found in the cell inner membrane. The sequence is that of UPF0283 membrane protein YcjF from Salmonella heidelberg (strain SL476).